The following is a 400-amino-acid chain: MEDGVYEPPDLTPEERMELENIRRRKQELLVEIQRLREELSEAMSEVEGLEANEGSKTLQRNRKMAMGRKKFNMDPKKGIQFLVENELLQNTPEEIARFLYKGEGLNKTAIGDYLGEREELNLAVLHAFVDLHEFTDLNLVQALRQFLWSFRLPGEAQKIDRMMEAFAQRYCLCNPGVFQSTDTCYVLSFAVIMLNTSLHNPNVRDKPGLERFVAMNRGINEGGDLPEELLRNLYDSIRNEPFKIPEDDGNDLTHTFFNPDREGWLLKLGGGRVKTWKRRWFILTDNCLYYFEYTTDKEPRGIIPLENLSIREVDDPRKPNCFELYIPNNKGQLIKACKTEADGRVVEGNHMVYRISAPTQEEKDEWIKSIQAAVSVDPFYEMLAARKKRISVKKKQEQP.

Residues aspartate 10 to arginine 63 are a coiled coil. Residues phenylalanine 72–asparagine 201 enclose the SEC7 domain. The region spanning asparagine 259–serine 376 is the PH domain. Residues lysine 268 to threonine 276, arginine 280, tyrosine 291, arginine 301, lysine 339, asparagine 350, and histidine 351 each bind a 1,2-diacyl-sn-glycero-3-phospho-(1D-myo-inositol-3,4,5-trisphosphate). A C-terminal autoinhibitory region region spans residues arginine 387 to lysine 395.

Heteromer. Composed of TAMALIN, CYTH2 and at least one GRM1. Interacts with ARRB1. Interacts with ARL4D; the interaction is direct. Directly interacts with CCDC120 through the coiled coil domain; this interaction stabilizes CCDC120, possibly by preventing its ubiquitination, and is required for neurite growth in neuroblastoma cells. Interacts with ARF1. Interacts with FRMD4A. Interacts (via N-terminal domain) with INAVA (via N-terminal domain). In terms of tissue distribution, widely expressed.

The protein resides in the cell membrane. It localises to the cytoplasm. It is found in the cell projection. The protein localises to the growth cone. Its subcellular location is the cell junction. The protein resides in the tight junction. It localises to the adherens junction. In terms of biological role, acts as a guanine-nucleotide exchange factor (GEF). Promotes guanine-nucleotide exchange on ARF1, ARF3 and ARF6. Activates ARF factors through replacement of GDP with GTP. The cell membrane form, in association with ARL4 proteins, recruits ARF6 to the plasma membrane. Involved in neurite growth. The sequence is that of Cytohesin-2 from Homo sapiens (Human).